A 264-amino-acid chain; its full sequence is Thymidylate synthase (264 aa).

Arg21 serves as a coordination point for dUMP. Residue His51 participates in (6R)-5,10-methylene-5,6,7,8-tetrahydrofolate binding. 126–127 (RR) contributes to the dUMP binding site. The active-site Nucleophile is Cys146. DUMP is bound by residues 166–169 (RSAD), Asn177, and 207–209 (HLY). Asp169 is a binding site for (6R)-5,10-methylene-5,6,7,8-tetrahydrofolate. Residue Ala263 coordinates (6R)-5,10-methylene-5,6,7,8-tetrahydrofolate.

It belongs to the thymidylate synthase family. Bacterial-type ThyA subfamily. As to quaternary structure, homodimer.

Its subcellular location is the cytoplasm. The enzyme catalyses dUMP + (6R)-5,10-methylene-5,6,7,8-tetrahydrofolate = 7,8-dihydrofolate + dTMP. The protein operates within pyrimidine metabolism; dTTP biosynthesis. Its function is as follows. Catalyzes the reductive methylation of 2'-deoxyuridine-5'-monophosphate (dUMP) to 2'-deoxythymidine-5'-monophosphate (dTMP) while utilizing 5,10-methylenetetrahydrofolate (mTHF) as the methyl donor and reductant in the reaction, yielding dihydrofolate (DHF) as a by-product. This enzymatic reaction provides an intracellular de novo source of dTMP, an essential precursor for DNA biosynthesis. The chain is Thymidylate synthase from Azoarcus sp. (strain BH72).